The sequence spans 225 residues: PKHD-type hydroxylase KPK_3192 (225 aa).

The Fe2OG dioxygenase domain occupies 78 to 177 (TISAPLFNRY…RQASFLWIQS (100 aa)). Fe cation-binding residues include His96, Asp98, and His158. Arg168 is a 2-oxoglutarate binding site.

The cofactor is Fe(2+). L-ascorbate serves as cofactor.

This chain is PKHD-type hydroxylase KPK_3192, found in Klebsiella pneumoniae (strain 342).